A 115-amino-acid chain; its full sequence is MTRVKRGYVARKRRKRVLQLTQGFRGAHSVLFRTANQQNIKALRYASRDRARRKRDFRRLWITRINAGARKQGLSYSQLMHRFKKCGILINRKVLAQLALLDTKTFNQLVFYTDL.

This sequence belongs to the bacterial ribosomal protein bL20 family.

It is found in the plastid. Its subcellular location is the chloroplast. In terms of biological role, binds directly to 23S ribosomal RNA and is necessary for the in vitro assembly process of the 50S ribosomal subunit. It is not involved in the protein synthesizing functions of that subunit. The protein is Large ribosomal subunit protein bL20c of Chlorokybus atmophyticus (Soil alga).